Here is a 44-residue protein sequence, read N- to C-terminus: Photosystem I reaction center subunit IX (44 aa).

A helical transmembrane segment spans residues Tyr-7 to Ile-27.

Belongs to the PsaJ family.

The protein resides in the plastid. Its subcellular location is the chloroplast thylakoid membrane. Its function is as follows. May help in the organization of the PsaE and PsaF subunits. The protein is Photosystem I reaction center subunit IX of Barbarea verna (Land cress).